The sequence spans 1036 residues: MDNEDKISISAKEEKILSFWKEQDIFQKTLDNREGCPTFSFYDGPPFATGLPHYGHLLAGTIKDVVCRYASMDGHYVPRRFGWDCHGVPVEYEVEKSLGLTEPGAIERFGVANFNEECRKIVFRYADEWKYFVDRIGRWVDFSATWRTMDLSFMESVWWVFRSLYDQGLVYEGTKVVPFSTKLGTPLSNFEAGQNYKEVDDPSVVVKFALQDNQGFLLAWTTTPWTLVSNMALAVHPELTYVRIKDKESGDEYILGQESLPRWFPDRESYEWIGQLSGKSLVGQSYEPLFPYFQDKKELEAFRILPADFIEESEGTGIVHMAPAFGEADFFACQEHNVPLVCPVDNQGCYTAEVKDFVGEYIKSADKGIARRLKNENKLFYQGTVRHRYPFCWRTDSPLIYKAVNSWFVAVEKVKSKMLKANESIHWTPEHIKQGRFGKWLEGARDWAISRNRYWGTPIPIWRSDDGELLVIGSIQELEALSGQKIVDLHRHFIDEIEINQNGKSFRRIPYVFDCWFDSGAMPYAQNHYPFERAEETEACFPADFIAEGLDQTRGWFYTLTVIAAALFDQPAFKNVIVNGIILAEDGNKMSKRLNNYPSPKMIMDAYGADALRLYLLNSVVVKAEDLRFSDKGVESVLKQVLLPLSNALAFYKTYAELYGFDPKETDNIELAEIDRWILSSLYSLVGKTRESMSQYDLHAAVNPFVDFIEDLTNWYIRRSRRRFWDAEDSADRRAAFSTLYEVLVVFSKVIAPFIPFIAEDMYQQLRGETDPESVHLCDFPHVVLEKILPDLERKMQDIREIVALGHSLRKEHKLKVRQPLQNVYIVGSKERKEALAQVGSLIGEELNVKDVHFCSETPEYVTTLIKPNFRTLGKKVGNRLPEIQRALAGLPQEQIQAFMHKGQMVVSLGEETISLDKEDITVSWASAEGFVARSSASFVAVLDCQLTEPLIMEGIARELVNKINTMRRNRKLHVSDRIAIRLHAPVIVQEAFALHKEYICEETLTTSVSVIDYKEGEEWDINGHAVSFVLERVER.

Positions 46 to 56 (PFATGLPHYGH) match the 'HIGH' region motif. The 'KMSKS' region motif lies at 589-593 (KMSKR). Lys-592 contacts ATP.

This sequence belongs to the class-I aminoacyl-tRNA synthetase family. IleS type 2 subfamily. As to quaternary structure, monomer. Zn(2+) serves as cofactor.

It is found in the cytoplasm. It catalyses the reaction tRNA(Ile) + L-isoleucine + ATP = L-isoleucyl-tRNA(Ile) + AMP + diphosphate. Functionally, catalyzes the attachment of isoleucine to tRNA(Ile). As IleRS can inadvertently accommodate and process structurally similar amino acids such as valine, to avoid such errors it has two additional distinct tRNA(Ile)-dependent editing activities. One activity is designated as 'pretransfer' editing and involves the hydrolysis of activated Val-AMP. The other activity is designated 'posttransfer' editing and involves deacylation of mischarged Val-tRNA(Ile). The polypeptide is Isoleucine--tRNA ligase (Chlamydia trachomatis serovar D (strain ATCC VR-885 / DSM 19411 / UW-3/Cx)).